A 440-amino-acid polypeptide reads, in one-letter code: F-box protein pof12 (440 aa).

The region spanning 8 to 54 (KNPASIFSHETLLHVLNDLSAHDLAALERVSRSWNSIVRRSSVWHNL) is the F-box domain.

As to quaternary structure, interacts with skp1.

It is found in the nucleus. The chain is F-box protein pof12 (pof12) from Schizosaccharomyces pombe (strain 972 / ATCC 24843) (Fission yeast).